Reading from the N-terminus, the 37-residue chain is Natriuretic peptide PNP (37 aa).

A disulfide bond links Cys14 and Cys30.

As to expression, expressed by the venom gland.

It is found in the secreted. Functionally, increases urine flow and decreases blood pressure when administered to rats by intravenous injection. Inhibits thrombin-induced platelet aggregation. Stimulates cGMP production via the natriuretic peptide receptor-A (NPR1). The sequence is that of Natriuretic peptide PNP from Pseudocerastes persicus (Persian horned viper).